A 142-amino-acid polypeptide reads, in one-letter code: uncharacterized protein (142 aa).

3 helical membrane passes run 3–23, 30–50, and 91–111; these read LIFI…FNLL, SVSW…AVWI, and FFLL…AYFS.

The protein localises to the membrane. This is an uncharacterized protein from Saccharomyces cerevisiae (strain ATCC 204508 / S288c) (Baker's yeast).